Consider the following 202-residue polypeptide: dITP/XTP pyrophosphatase (202 aa).

Residue 7–12 (SRNEAK) coordinates substrate. Aspartate 68 serves as the catalytic Proton acceptor. Aspartate 68 is a Mg(2+) binding site. Substrate is bound by residues serine 69, 156 to 159 (FGYD), lysine 179, and 184 to 185 (HR).

Belongs to the HAM1 NTPase family. In terms of assembly, homodimer. Requires Mg(2+) as cofactor.

It catalyses the reaction XTP + H2O = XMP + diphosphate + H(+). The enzyme catalyses dITP + H2O = dIMP + diphosphate + H(+). It carries out the reaction ITP + H2O = IMP + diphosphate + H(+). Its function is as follows. Pyrophosphatase that catalyzes the hydrolysis of nucleoside triphosphates to their monophosphate derivatives, with a high preference for the non-canonical purine nucleotides XTP (xanthosine triphosphate), dITP (deoxyinosine triphosphate) and ITP. Seems to function as a house-cleaning enzyme that removes non-canonical purine nucleotides from the nucleotide pool, thus preventing their incorporation into DNA/RNA and avoiding chromosomal lesions. This chain is dITP/XTP pyrophosphatase, found in Frankia alni (strain DSM 45986 / CECT 9034 / ACN14a).